The following is a 408-amino-acid chain: Peptidase T (408 aa).

His-78 is a Zn(2+) binding site. Residue Asp-80 is part of the active site. Asp-141 contributes to the Zn(2+) binding site. The Proton acceptor role is filled by Glu-175. Zn(2+)-binding residues include Glu-176, Asp-198, and His-380.

This sequence belongs to the peptidase M20B family. Zn(2+) serves as cofactor.

The protein localises to the cytoplasm. The enzyme catalyses Release of the N-terminal residue from a tripeptide.. Functionally, cleaves the N-terminal amino acid of tripeptides. This Clostridium botulinum (strain Kyoto / Type A2) protein is Peptidase T.